The following is a 156-amino-acid chain: ATP synthase subunit b (156 aa).

Residues 5-27 form a helical membrane-spanning segment; the sequence is ITLIGQMITFAIFVGFTMKFVWP.

Belongs to the ATPase B chain family. F-type ATPases have 2 components, F(1) - the catalytic core - and F(0) - the membrane proton channel. F(1) has five subunits: alpha(3), beta(3), gamma(1), delta(1), epsilon(1). F(0) has three main subunits: a(1), b(2) and c(10-14). The alpha and beta chains form an alternating ring which encloses part of the gamma chain. F(1) is attached to F(0) by a central stalk formed by the gamma and epsilon chains, while a peripheral stalk is formed by the delta and b chains.

The protein resides in the cell inner membrane. Functionally, f(1)F(0) ATP synthase produces ATP from ADP in the presence of a proton or sodium gradient. F-type ATPases consist of two structural domains, F(1) containing the extramembraneous catalytic core and F(0) containing the membrane proton channel, linked together by a central stalk and a peripheral stalk. During catalysis, ATP synthesis in the catalytic domain of F(1) is coupled via a rotary mechanism of the central stalk subunits to proton translocation. Its function is as follows. Component of the F(0) channel, it forms part of the peripheral stalk, linking F(1) to F(0). The sequence is that of ATP synthase subunit b from Francisella tularensis subsp. tularensis (strain SCHU S4 / Schu 4).